The following is a 307-amino-acid chain: D-alanine--D-alanine ligase (307 aa).

Positions 104 to 301 (RTAFLAAGLP…FVSLCRWMVE (198 aa)) constitute an ATP-grasp domain. 130-183 (PLPRPFVIKPANEGSAVGVHILHEGDNRRTEIARSWSFGGQALVEEYIPGRELT) is an ATP binding site. Mg(2+)-binding residues include aspartate 251, glutamate 268, and asparagine 270.

It belongs to the D-alanine--D-alanine ligase family. Requires Mg(2+) as cofactor. Mn(2+) is required as a cofactor.

The protein resides in the cytoplasm. The catalysed reaction is 2 D-alanine + ATP = D-alanyl-D-alanine + ADP + phosphate + H(+). The protein operates within cell wall biogenesis; peptidoglycan biosynthesis. In terms of biological role, cell wall formation. In Granulibacter bethesdensis (strain ATCC BAA-1260 / CGDNIH1), this protein is D-alanine--D-alanine ligase.